The following is a 238-amino-acid chain: Lactate utilization protein A (238 aa).

It belongs to the LutA/YkgE family.

Functionally, is involved in L-lactate degradation and allows cells to grow with lactate as the sole carbon source. The sequence is that of Lactate utilization protein A from Anoxybacillus flavithermus (strain DSM 21510 / WK1).